We begin with the raw amino-acid sequence, 163 residues long: Type II secretion system protein M (163 aa).

Over 1 to 19 (MMDKLQGWWRSISAREQRL) the chain is Cytoplasmic. A helical membrane pass occupies residues 20-40 (VAVGGSCLLIGFCYWIVWQPI). Topologically, residues 41 to 163 (ANRIAERERQ…VRRLQLSRPQ (123 aa)) are periplasmic.

Belongs to the GSP M family. In terms of assembly, type II secretion system is composed of four main components: the outer membrane complex, the inner membrane complex, the cytoplasmic secretion ATPase and the periplasm-spanning pseudopilus. Forms homodimers. Interacts with ExeL/GspL. Interacts with ExeE/GspE and ExeF/GspF.

It localises to the cell inner membrane. In terms of biological role, inner membrane component of the type II secretion system required for the energy-dependent secretion of extracellular factors such as proteases and toxins from the periplasm. Plays a role in the complex assembly and recruits ExeL resulting in a stable complex in the inner membrane. Provides thus a link between the energy-providing ExeE protein in the cytoplasm and the rest of the T2SS machinery. The chain is Type II secretion system protein M (exeM) from Aeromonas hydrophila.